A 354-amino-acid polypeptide reads, in one-letter code: Vanillate O-demethylase oxygenase subunit (354 aa).

Residues 7–107 (WYVACTPDEI…VEERYGFIWV (101 aa)) form the Rieske domain. [2Fe-2S] cluster-binding residues include Cys-47, His-49, Cys-66, and His-69.

The protein belongs to the bacterial ring-hydroxylating dioxygenase alpha subunit family. In terms of assembly, this demethylase system consists of two proteins: an oxygenase and an oxygenase reductase. Requires [2Fe-2S] cluster as cofactor. It depends on Fe cation as a cofactor.

The catalysed reaction is vanillate + NADH + O2 + H(+) = 3,4-dihydroxybenzoate + formaldehyde + NAD(+) + H2O. The protein operates within xenobiotic degradation; vanillyl-alcohol degradation. In Pseudomonas sp. (strain HR199 / DSM 7063), this protein is Vanillate O-demethylase oxygenase subunit (vanA).